The chain runs to 405 residues: Cystathionine gamma-lyase (405 aa).

3 residues coordinate substrate: Arg62, Tyr114, and Arg119. Position 212 is an N6-(pyridoxal phosphate)lysine (Lys212). Residue Glu339 coordinates substrate.

This sequence belongs to the trans-sulfuration enzymes family. As to quaternary structure, homotetramer. Interacts with CALM in a calcium-dependent manner. Requires pyridoxal 5'-phosphate as cofactor.

The protein resides in the cytoplasm. The catalysed reaction is L,L-cystathionine + H2O = 2-oxobutanoate + L-cysteine + NH4(+). The enzyme catalyses L-cysteine + H2O = hydrogen sulfide + pyruvate + NH4(+) + H(+). It carries out the reaction L-homocysteine + H2O = 2-oxobutanoate + hydrogen sulfide + NH4(+) + H(+). It catalyses the reaction L-homoserine = 2-oxobutanoate + NH4(+). The catalysed reaction is L-selenocystathionine + H2O = L-selenocysteine + 2-oxobutanoate + NH4(+). It functions in the pathway amino-acid biosynthesis; L-cysteine biosynthesis; L-cysteine from L-homocysteine and L-serine: step 2/2. Its function is as follows. Catalyzes the last step in the trans-sulfuration pathway from L-methionine to L-cysteine in a pyridoxal-5'-phosphate (PLP)-dependent manner, which consists on cleaving the L,L-cystathionine molecule into L-cysteine, ammonia and 2-oxobutanoate. Part of the L-cysteine derived from the trans-sulfuration pathway is utilized for biosynthesis of the ubiquitous antioxidant glutathione. Besides its role in the conversion of L-cystathionine into L-cysteine, it utilizes L-cysteine and L-homocysteine as substrates (at much lower rates than L,L-cystathionine) to produce hydrogen sulfide (H2S). In vitro, it converts two L-cysteine molecules into lanthionine and H2S, and two L-homocysteine molecules to homolanthionine and H2S, which can be particularly relevant under conditions of severe hyperhomocysteinemia. Lanthionine and homolanthionine are structural homologs of L,L-cystathionine that differ by the absence or presence of an extra methylene group, respectively. Acts as a cysteine-protein sulfhydrase by mediating sulfhydration of target proteins: sulfhydration consists of converting -SH groups into -SSH on specific cysteine residues of target proteins such as GAPDH, PTPN1 and NF-kappa-B subunit RELA, thereby regulating their function. By generating the gasotransmitter H2S, it participates in a number of physiological processes such as vasodilation, bone protection, and inflammation. Plays an essential role in myogenesis by contributing to the biogenesis of H2S in skeletal muscle tissue. Can also accept homoserine as substrate. Catalyzes the elimination of selenocystathionine (which can be derived from the diet) to yield selenocysteine, ammonia and 2-oxobutanoate. This is Cystathionine gamma-lyase (CTH) from Sus scrofa (Pig).